Here is a 467-residue protein sequence, read N- to C-terminus: UDP-N-acetylmuramate--L-alanine ligase (467 aa).

Residue 114–120 coordinates ATP; that stretch reads GTHGKTT.

Belongs to the MurCDEF family.

It localises to the cytoplasm. The enzyme catalyses UDP-N-acetyl-alpha-D-muramate + L-alanine + ATP = UDP-N-acetyl-alpha-D-muramoyl-L-alanine + ADP + phosphate + H(+). It functions in the pathway cell wall biogenesis; peptidoglycan biosynthesis. Its function is as follows. Cell wall formation. The protein is UDP-N-acetylmuramate--L-alanine ligase of Nitrobacter hamburgensis (strain DSM 10229 / NCIMB 13809 / X14).